A 107-amino-acid polypeptide reads, in one-letter code: Large ribosomal subunit protein uL24 (107 aa).

It belongs to the universal ribosomal protein uL24 family. As to quaternary structure, part of the 50S ribosomal subunit.

One of two assembly initiator proteins, it binds directly to the 5'-end of the 23S rRNA, where it nucleates assembly of the 50S subunit. Its function is as follows. One of the proteins that surrounds the polypeptide exit tunnel on the outside of the subunit. This chain is Large ribosomal subunit protein uL24, found in Coxiella burnetii (strain Dugway 5J108-111).